Consider the following 407-residue polypeptide: Imidazolonepropionase (407 aa).

Fe(3+)-binding residues include H68 and H70. Zn(2+)-binding residues include H68 and H70. R77, Y140, and H173 together coordinate 4-imidazolone-5-propanoate. Position 140 (Y140) interacts with N-formimidoyl-L-glutamate. A Fe(3+)-binding site is contributed by H238. H238 contributes to the Zn(2+) binding site. Q241 serves as a coordination point for 4-imidazolone-5-propanoate. Residue D313 coordinates Fe(3+). Zn(2+) is bound at residue D313. N-formimidoyl-L-glutamate is bound by residues N315 and G317. Residue T318 participates in 4-imidazolone-5-propanoate binding.

Belongs to the metallo-dependent hydrolases superfamily. HutI family. Requires Zn(2+) as cofactor. The cofactor is Fe(3+).

The protein resides in the cytoplasm. The enzyme catalyses 4-imidazolone-5-propanoate + H2O = N-formimidoyl-L-glutamate. The protein operates within amino-acid degradation; L-histidine degradation into L-glutamate; N-formimidoyl-L-glutamate from L-histidine: step 3/3. Catalyzes the hydrolytic cleavage of the carbon-nitrogen bond in imidazolone-5-propanoate to yield N-formimidoyl-L-glutamate. It is the third step in the universal histidine degradation pathway. This Burkholderia mallei (strain ATCC 23344) protein is Imidazolonepropionase.